Here is a 199-residue protein sequence, read N- to C-terminus: Thymidine kinase (199 aa).

ATP contacts are provided by residues 15–22 (GSMFSGKS) and 88–91 (DEIQ). The active-site Proton acceptor is E89. C145, C148, C183, and H186 together coordinate Zn(2+).

Belongs to the thymidine kinase family. In terms of assembly, homotetramer.

Its subcellular location is the cytoplasm. It catalyses the reaction thymidine + ATP = dTMP + ADP + H(+). The polypeptide is Thymidine kinase (Staphylococcus haemolyticus (strain JCSC1435)).